Here is a 307-residue protein sequence, read N- to C-terminus: 3-ketodihydrosphingosine reductase TSC10 (307 aa).

An NADP(+)-binding site is contributed by Leu11. NADPH is bound by residues Gly14, Ser16, and Gly18. The short motif at Gly14 to Gly18 is the GXSXG element. Position 19 (Leu19) interacts with NADP(+). 3 residues coordinate NADPH: Arg40, Lys44, and Leu74. Ser147 acts as the Proton donor in catalysis. Tyr161, Lys165, and Ser194 together coordinate NADP(+). Tyr161 acts as the Proton acceptor in catalysis. The active-site Lowers pKa of active site Tyr is the Lys165. The helical transmembrane segment at Tyr261–Ile281 threads the bilayer.

Belongs to the short-chain dehydrogenases/reductases (SDR) family.

Its subcellular location is the endoplasmic reticulum membrane. The enzyme catalyses sphinganine + NADP(+) = 3-oxosphinganine + NADPH + H(+). Its pathway is lipid metabolism; sphingolipid metabolism. Its function is as follows. Catalyzes the reduction of 3'-oxosphinganine (3-ketodihydrosphingosine/KDS) to sphinganine (dihydrosphingosine/DHS), the second step of de novo sphingolipid biosynthesis. In Eremothecium gossypii (strain ATCC 10895 / CBS 109.51 / FGSC 9923 / NRRL Y-1056) (Yeast), this protein is 3-ketodihydrosphingosine reductase TSC10 (TSC10).